A 390-amino-acid polypeptide reads, in one-letter code: tRNA(Met) cytidine acetate ligase (390 aa).

ATP-binding positions include 7–20, G101, N152, and R177; that span reads ITEY…HIYH.

The protein belongs to the TmcAL family.

It localises to the cytoplasm. The enzyme catalyses cytidine(34) in elongator tRNA(Met) + acetate + ATP = N(4)-acetylcytidine(34) in elongator tRNA(Met) + AMP + diphosphate. Its function is as follows. Catalyzes the formation of N(4)-acetylcytidine (ac(4)C) at the wobble position of elongator tRNA(Met), using acetate and ATP as substrates. First activates an acetate ion to form acetyladenylate (Ac-AMP) and then transfers the acetyl group to tRNA to form ac(4)C34. The protein is tRNA(Met) cytidine acetate ligase of Leuconostoc mesenteroides subsp. mesenteroides (strain ATCC 8293 / DSM 20343 / BCRC 11652 / CCM 1803 / JCM 6124 / NCDO 523 / NBRC 100496 / NCIMB 8023 / NCTC 12954 / NRRL B-1118 / 37Y).